The sequence spans 110 residues: Large ribosomal subunit protein uL22 (110 aa).

Belongs to the universal ribosomal protein uL22 family. As to quaternary structure, part of the 50S ribosomal subunit.

This protein binds specifically to 23S rRNA; its binding is stimulated by other ribosomal proteins, e.g. L4, L17, and L20. It is important during the early stages of 50S assembly. It makes multiple contacts with different domains of the 23S rRNA in the assembled 50S subunit and ribosome. In terms of biological role, the globular domain of the protein is located near the polypeptide exit tunnel on the outside of the subunit, while an extended beta-hairpin is found that lines the wall of the exit tunnel in the center of the 70S ribosome. The polypeptide is Large ribosomal subunit protein uL22 (Yersinia enterocolitica serotype O:8 / biotype 1B (strain NCTC 13174 / 8081)).